The primary structure comprises 686 residues: ATP-dependent zinc metalloprotease FtsH 2 (686 aa).

Residues 1-11 (MKKNIKDIFKN) are Cytoplasmic-facing. The chain crosses the membrane as a helical span at residues 12–32 (FNIFWFCFIFLLLSLLYCLIM). Topologically, residues 33-178 (MEISHQHDNN…LQRIPYQPYF (146 aa)) are extracellular. A helical membrane pass occupies residues 179–199 (GFAPFISAVNICILIIIFYFI). Over 200–686 (YNSIEKTSAQ…QKSEKEDCNK (487 aa)) the chain is Cytoplasmic. 272 to 279 (GPPGVGKT) is a binding site for ATP. His-493 serves as a coordination point for Zn(2+). Residue Glu-494 is part of the active site. The Zn(2+) site is built by His-497 and Asp-569.

The protein in the central section; belongs to the AAA ATPase family. It in the C-terminal section; belongs to the peptidase M41 family. In terms of assembly, homohexamer. The cofactor is Zn(2+).

It is found in the cell membrane. Its function is as follows. Acts as a processive, ATP-dependent zinc metallopeptidase for both cytoplasmic and membrane proteins. Plays a role in the quality control of integral membrane proteins. The polypeptide is ATP-dependent zinc metalloprotease FtsH 2 (Phytoplasma mali (strain AT)).